The primary structure comprises 598 residues: Beta-fructofuranosidase, insoluble isoenzyme 2 (598 aa).

The signal sequence occupies residues 1-25 (MGVLGSRVAWAWLVQLLLLQQLAGA). The active site involves D69. 3 N-linked (GlcNAc...) asparagine glycosylation sites follow: N164, N189, and N348.

It belongs to the glycosyl hydrolase 32 family. In terms of tissue distribution, expressed in leaves and flowers. Weakly expressed in seeds. Expressed in growing roots, node and the rapidly elongating zone of the internode.

The protein resides in the secreted. The protein localises to the cell wall. It catalyses the reaction Hydrolysis of terminal non-reducing beta-D-fructofuranoside residues in beta-D-fructofuranosides.. Cell wall-associated invertase that cleaves sucrose into glucose and fructose and is required for assimilated carbon partitioning during early grain-filling. May be involved in sucrose unloaded in the ovular and stylar vascular tissues for the stimulation of starch synthesis in the developing endosperm during grain-filling. Sugar homeostasis mediated by CIN2/GIF1 plays an important role in constitutive and induced physical and chemical defense against pathogens. In Oryza sativa subsp. japonica (Rice), this protein is Beta-fructofuranosidase, insoluble isoenzyme 2 (CIN2).